Reading from the N-terminus, the 872-residue chain is Alanine--tRNA ligase (872 aa).

4 residues coordinate Zn(2+): histidine 567, histidine 571, cysteine 669, and histidine 673.

The protein belongs to the class-II aminoacyl-tRNA synthetase family. Zn(2+) serves as cofactor.

It localises to the cytoplasm. The catalysed reaction is tRNA(Ala) + L-alanine + ATP = L-alanyl-tRNA(Ala) + AMP + diphosphate. Functionally, catalyzes the attachment of alanine to tRNA(Ala) in a two-step reaction: alanine is first activated by ATP to form Ala-AMP and then transferred to the acceptor end of tRNA(Ala). Also edits incorrectly charged Ser-tRNA(Ala) and Gly-tRNA(Ala) via its editing domain. The sequence is that of Alanine--tRNA ligase from Streptococcus pyogenes serotype M4 (strain MGAS10750).